A 316-amino-acid polypeptide reads, in one-letter code: CD276 antigen (316 aa).

An N-terminal signal peptide occupies residues 1–28 (MLRGWGGPSVGVCVRTALGVLCLCLTGA). One can recognise an Ig-like V-type domain in the interval 29 to 139 (VEVQVSEDPV…DSAAVSLQVA (111 aa)). Residues 29–248 (VEVQVSEDPV…GQPLTFPPEA (220 aa)) are Extracellular-facing. 3 N-linked (GlcNAc...) asparagine glycosylation sites follow: asparagine 104, asparagine 189, and asparagine 215. The 94-residue stretch at 145-238 (PSMTLEPNKD…QDAHGSVTIT (94 aa)) folds into the Ig-like C2-type domain. An intrachain disulfide couples cysteine 165 to cysteine 220. Residues 249-269 (LWVTVGLSVCLVVLLVALAFV) form a helical membrane-spanning segment. The Cytoplasmic portion of the chain corresponds to 270 to 316 (CWRKIKQSCEEENAGAEDQDGDGEGSKTALRPLKPSENKEDDGQEIA). Positions 280-292 (EENAGAEDQDGDG) are enriched in acidic residues. The tract at residues 280–316 (EENAGAEDQDGDGEGSKTALRPLKPSENKEDDGQEIA) is disordered.

Belongs to the immunoglobulin superfamily. BTN/MOG family. Interacts with TREML2 and this interaction enhances T-cell activation. Ubiquitous.

Its subcellular location is the membrane. Modulates T-cell-mediated immune responses and the development of acute and chronic transplant rejection. Plays a positive regulatory role in bone formation and has a dual role in the bone-immune interface. Induces antitumor immunity as it activates both acquired and innate immunity leading to natural killer cell and CD8 T-cell dependent killing of tumor cells. This Mus musculus (Mouse) protein is CD276 antigen (Cd276).